The sequence spans 362 residues: GDSL esterase/lipase At5g22810 (362 aa).

An N-terminal signal peptide occupies residues 1 to 28; sequence MGFSGIWLNLYVVFGSLMVFERMVVMVV. S44 (nucleophile) is an active-site residue. Residues N159, N162, N264, and N329 are each glycosylated (N-linked (GlcNAc...) asparagine). Residues D337 and H340 contribute to the active site.

It belongs to the 'GDSL' lipolytic enzyme family.

The protein localises to the secreted. The chain is GDSL esterase/lipase At5g22810 from Arabidopsis thaliana (Mouse-ear cress).